Reading from the N-terminus, the 501-residue chain is Tetrachloroethene reductive dehalogenase (501 aa).

The segment at residues 1 to 37 (MEKKKKPELSRRDFGKLIIGGGAAATIAPFGVPGANA) is a signal peptide (tat-type signal). Residues Ala-74, Tyr-207, 309-314 (NGVGQS), 329-332 (MGAC), and 341-343 (VRL) contribute to the corrinoid site. In terms of domain architecture, 4Fe-4S ferredoxin-type 1 spans 356–386 (KPIDFGVTEFCETCKKCARECPSKAITEGPR). [4Fe-4S] cluster contacts are provided by Cys-366, Cys-369, Cys-372, and Cys-376. 394-401 (HNQSGKLQ) contacts corrinoid. Cys-409 contributes to the [4Fe-4S] cluster binding site. Position 419 (Tyr-419) interacts with corrinoid. Residues Cys-420, Cys-423, and Cys-427 each coordinate [4Fe-4S] cluster. The 20-residue stretch at 420-439 (CGVCVAVCPFTKGNIWIHDG) folds into the 4Fe-4S ferredoxin-type 2 domain.

It belongs to the PceA family. Monomer. The cofactor is [4Fe-4S] cluster. Corrinoid serves as cofactor. In terms of processing, predicted to be exported by the Tat system. The position of the signal peptide cleavage has not been experimentally proven.

The protein localises to the cytoplasm. It localises to the cell inner membrane. It carries out the reaction trichloroethene + chloride + A + H(+) = tetrachloroethene + AH2. The catalysed reaction is trichloroethene + AH2 = (Z)-1,2-dichloroethene + chloride + A + H(+). Its activity is regulated as follows. Both the processed and unprocessed enzymes are catalytically active. PCE-dependent growth and PceA activity are inhibited in the presence of high concentrations of 5,6-dimethylbenzimidazole (DMB), probably due to the formation a DMB-containing nor-B12 cofactor. Dechlorination of PCE is stimulated by ammonium ions. Activity is inhibited by chlorinated methanes. In terms of biological role, catalyzes the reductive dechlorination of tetrachloroethene (PCE) to trichloroethene (TCE) and of trichloroethene to cis-1,2-dichloroethene (DCE). In addition, trans-1,3-dichloropropene, 1,1,3-trichloropropene and 2,3-dichloropropene are reduced to a mixture of mono-chloropropenes, 1,1-dichloropropene, and 2-chloropropene, respectively. Is also able to convert brominated phenols such as 4-bromophenol (4-BP), 2,4-dibromophenol (2,4-DBP) and 2,4,6-tribromophenol (2,4,6-TBP). Utilizes formate or pyruvate as electron donors. Titanium(III) citrate could also serve as electron donor. Reduced methyl viologen can act as the artificial electron donor. The polypeptide is Tetrachloroethene reductive dehalogenase (Sulfurospirillum multivorans (Dehalospirillum multivorans)).